Here is a 305-residue protein sequence, read N- to C-terminus: Ribonuclease Z (305 aa).

7 residues coordinate Zn(2+): His61, His63, Asp65, His66, His138, Asp208, and His266. The Proton acceptor role is filled by Asp65.

This sequence belongs to the RNase Z family. As to quaternary structure, homodimer. The cofactor is Zn(2+).

The catalysed reaction is Endonucleolytic cleavage of RNA, removing extra 3' nucleotides from tRNA precursor, generating 3' termini of tRNAs. A 3'-hydroxy group is left at the tRNA terminus and a 5'-phosphoryl group is left at the trailer molecule.. Zinc phosphodiesterase, which displays some tRNA 3'-processing endonuclease activity. Probably involved in tRNA maturation, by removing a 3'-trailer from precursor tRNA. In Methanosarcina mazei (strain ATCC BAA-159 / DSM 3647 / Goe1 / Go1 / JCM 11833 / OCM 88) (Methanosarcina frisia), this protein is Ribonuclease Z.